The primary structure comprises 307 residues: Thiamine-monophosphate kinase (307 aa).

The Mg(2+) site is built by aspartate 26, threonine 37, threonine 38, and aspartate 39. Residue histidine 46 coordinates substrate. The Mg(2+) site is built by aspartate 68 and aspartate 117. ATP contacts are provided by residues 116–117 (GD) and arginine 140. Aspartate 207 lines the Mg(2+) pocket. Threonine 209 is a binding site for ATP. Residue aspartate 210 coordinates Mg(2+). Residues glutamate 254 and phenylalanine 304 each coordinate substrate.

This sequence belongs to the thiamine-monophosphate kinase family.

It carries out the reaction thiamine phosphate + ATP = thiamine diphosphate + ADP. It participates in cofactor biosynthesis; thiamine diphosphate biosynthesis; thiamine diphosphate from thiamine phosphate: step 1/1. Catalyzes the ATP-dependent phosphorylation of thiamine-monophosphate (TMP) to form thiamine-pyrophosphate (TPP), the active form of vitamin B1. This is Thiamine-monophosphate kinase from Leptospira interrogans serogroup Icterohaemorrhagiae serovar Lai (strain 56601).